We begin with the raw amino-acid sequence, 2176 residues long: Protein eyes shut (2176 aa).

Topologically, residues 1–122 (MSNVHQFDTQ…NPNILLPTLR (122 aa)) are cytoplasmic. The chain crosses the membrane as a helical span at residues 123–143 (ILARGLLLPALILAILVGSSQ). Residues 144 to 180 (AGFACLSNPCVFGVCIDGLNSSYSCYCIDGYTGIQCQ) enclose the EGF-like 1 domain. Over 144–2176 (AGFACLSNPC…DLHGDEPLTV (2033 aa)) the chain is Extracellular. 21 disulfide bridges follow: Cys-148-Cys-158, Cys-153-Cys-168, Cys-170-Cys-179, Cys-186-Cys-197, Cys-191-Cys-206, Cys-208-Cys-217, Cys-224-Cys-235, Cys-229-Cys-244, Cys-246-Cys-255, Cys-262-Cys-276, Cys-270-Cys-286, Cys-288-Cys-297, Cys-304-Cys-315, Cys-309-Cys-324, Cys-326-Cys-335, Cys-342-Cys-353, Cys-347-Cys-362, Cys-364-Cys-373, Cys-380-Cys-392, Cys-386-Cys-401, and Cys-403-Cys-412. An N-linked (GlcNAc...) asparagine glycan is attached at Asn-163. The region spanning 182 to 218 (NWDECWSSPCQNGGTCVDGVAYYNCTCPEGFSGSNCE) is the EGF-like 2; calcium-binding domain. Asn-205 carries an N-linked (GlcNAc...) asparagine glycan. One can recognise an EGF-like 3; calcium-binding domain in the interval 220-256 (NVDECMSNPCQNGGLCRDRTNGYICTCQPGYLGSHCE). In terms of domain architecture, EGF-like 4 spans 258 to 298 (DVAVCETGTGARCQHGGECIEGPGLEFTCDCPAGWHGRICQ). The region spanning 300–336 (EINECASSPCQNGGVCVDKLAAYACACPMGYTGINCE) is the EGF-like 5; calcium-binding domain. One can recognise an EGF-like 6 domain in the interval 338 to 374 (EILICADNPCQNNALCLMEEGVPTCYCVPDYHGEKCE). The EGF-like 7; calcium-binding domain maps to 376 to 413 (QYDECQLGPRCMNGGVCIDGVDTFSCSCPPLLTGMLCE). Asn-425 is a glycosylation site (N-linked (GlcNAc...) asparagine). 2 stretches are compositionally biased toward low complexity: residues 429–447 (PATQ…MAPP) and 482–502 (VTSV…VSVE). Disordered stretches follow at residues 429 to 465 (PATQ…SRAS), 482 to 639 (VTSV…RPTA), 757 to 783 (RFTT…LPTP), 802 to 854 (LITT…VEIT), and 902 to 1014 (APPA…GVPE). Residues 514 to 526 (GSHSISVEQTTAV) are compositionally biased toward polar residues. Residues 548-560 (SASESETETEEEI) are compositionally biased toward acidic residues. Low complexity-rich tracts occupy residues 564 to 582 (TTAR…ESPS) and 596 to 632 (TSAS…SEEV). Residues 757 to 775 (RFTTVQPPAGVTTTSPTED) are compositionally biased toward polar residues. The span at 811 to 820 (THHHHHHHPH) shows a compositional bias: basic residues. 2 stretches are compositionally biased toward pro residues: residues 904–922 (PATP…PSPP) and 930–955 (TLPP…PTPP). Residues 1018-1054 (GDVDCIKLGCYNGGTCVTTSEGSRCVCRFDRQGPLCE) enclose the EGF-like 8 domain. 3 cysteine pairs are disulfide-bonded: Cys-1022/Cys-1033, Cys-1027/Cys-1042, and Cys-1044/Cys-1053. In terms of domain architecture, Laminin G-like 1 spans 1059–1266 (IRNAAFSGDS…GITECGSLAC (208 aa)). Residues Asn-1165, Asn-1170, and Asn-1176 are each glycosylated (N-linked (GlcNAc...) asparagine). The region spanning 1309–1346 (EISVCEDNPCQYGGTCVQFPGSGYLCLCPLGKHGHYCE) is the EGF-like 9 domain. Intrachain disulfides connect Cys-1313/Cys-1324, Cys-1318/Cys-1334, and Cys-1336/Cys-1345. The Laminin G-like 2 domain occupies 1353 to 1549 (LPSFSGSVNG…GVGQCGTREC (197 aa)). Asn-1471 is a glycosylation site (N-linked (GlcNAc...) asparagine). 2 consecutive EGF-like domains span residues 1545 to 1581 (GTRE…PLCA) and 1583 to 1621 (PTNP…KNCE). 6 disulfide bridges follow: Cys-1549/Cys-1560, Cys-1554/Cys-1569, Cys-1571/Cys-1580, Cys-1587/Cys-1600, Cys-1594/Cys-1609, and Cys-1611/Cys-1620. N-linked (GlcNAc...) asparagine glycosylation is found at Asn-1665 and Asn-1861. Residues 1692–1879 (EKQRSFSPVP…NIRDCDGTAC (188 aa)) enclose the Laminin G-like 3 domain. 2 EGF-like domains span residues 1875–1912 (DGTA…DRCE) and 1913–1946 (YSET…FYCE). 6 cysteine pairs are disulfide-bonded: Cys-1879-Cys-1890, Cys-1884-Cys-1900, Cys-1902-Cys-1911, Cys-1917-Cys-1928, Cys-1922-Cys-1934, and Cys-1936-Cys-1945. The region spanning 1952–2166 (PTTPSFRGNS…TYQGENIGSC (215 aa)) is the Laminin G-like 4 domain. 3 N-linked (GlcNAc...) asparagine glycosylation sites follow: Asn-1994, Asn-2035, and Asn-2099. The interval 2080–2101 (GGRSLGSTTPRSTLAGRRKNSS) is disordered.

Belongs to the EYS family. In terms of tissue distribution, expressed from the beginning of rhabdomere biogenesis (48 hours after pupal formation), when it decorates the entire photoreceptor apical surface.

The protein resides in the membrane. It is found in the secreted. In terms of biological role, essential for the formation of matrix-filled interrhabdomeral space: critical for the formation of epithelial lumina in the retina. Acts together with prominin (prom) and the cell adhesion molecule chaoptin (chp) to choreograph the partitioning of rhabdomeres into an open system. In Drosophila melanogaster (Fruit fly), this protein is Protein eyes shut.